Reading from the N-terminus, the 293-residue chain is Protein orai (293 aa).

The Cytoplasmic portion of the chain corresponds to 1 to 122; that stretch reads MPRSHDPSRV…RAQLKASSRT (122 aa). The segment at 62-81 is disordered; that stretch reads STAGGGSRNGVGSKEGSVTS. A helical membrane pass occupies residues 123–141; the sequence is SALLAGFAMVCLVELQYDQ. Topologically, residues 142–146 are extracellular; the sequence is STPKP. The helical transmembrane segment at 147–167 threads the bilayer; the sequence is LLIVLGVVTSLLVSVHLLALM. Topologically, residues 168-198 are cytoplasmic; sequence MSTCILPYMEATGCTQDSPHIKLKFYIDLSW. A helical transmembrane segment spans residues 199–219; that stretch reads LFSTCIGLLLFLVEIGVIFYV. Topologically, residues 220–230 are extracellular; sequence KFTAVGYPTAG. Residues 231-251 traverse the membrane as a helical segment; sequence YITTAMLVPVGVVFVVFSYLI. Residues 252 to 293 are Cytoplasmic-facing; it reads HKNRVSHSLGRFKHKVDTMKQFLDVEANLQKSTLAPSTIRDI.

This sequence belongs to the Orai family. Expressed in gonad sheath cells, hypodermis, intestine and spermatheca. Coexpressed with stim-1.

The protein resides in the membrane. Ca(2+) release-activated Ca(2+)-like (CRAC-like) channel subunit which mediates Ca(2+) influx and increase in Ca(2+)-selective current by synergy with the Ca(2+) sensor, stim-1. Required for Ca(2+) and IP3-dependent contractile activity of sheath cells and the spermatheca. Affects brood size and somatic cell function. This Caenorhabditis elegans protein is Protein orai (orai-1).